Here is a 530-residue protein sequence, read N- to C-terminus: GH3 domain-containing protein (530 aa).

Positions 1–17 are cleaved as a signal peptide; it reads MLLWPLLLLLLLLPTLA. The disordered stretch occupies residues 99–122; that stretch reads LTKASQTQQEDSGEQPLPPTSNQD. Asn-450 is a glycosylation site (N-linked (GlcNAc...) asparagine). Gln-489 is subject to N5-methylglutamine.

It belongs to the GH3 family. In terms of processing, methylated at Gln-489 by N6AMT1.

Its subcellular location is the endoplasmic reticulum. The protein resides in the nucleus envelope. In Homo sapiens (Human), this protein is GH3 domain-containing protein (GHDC).